The following is a 296-amino-acid chain: Nucleotide-binding protein M6_Spy0559 (296 aa).

Position 13–20 (13–20) interacts with ATP; that stretch reads GMSGAGKT. 63 to 66 serves as a coordination point for GTP; that stretch reads DMRS.

The protein belongs to the RapZ-like family.

Its function is as follows. Displays ATPase and GTPase activities. In Streptococcus pyogenes serotype M6 (strain ATCC BAA-946 / MGAS10394), this protein is Nucleotide-binding protein M6_Spy0559.